A 125-amino-acid chain; its full sequence is Large ribosomal subunit protein bL12 (125 aa).

This sequence belongs to the bacterial ribosomal protein bL12 family. As to quaternary structure, homodimer. Part of the ribosomal stalk of the 50S ribosomal subunit. Forms a multimeric L10(L12)X complex, where L10 forms an elongated spine to which 2 to 4 L12 dimers bind in a sequential fashion. Binds GTP-bound translation factors.

Forms part of the ribosomal stalk which helps the ribosome interact with GTP-bound translation factors. Is thus essential for accurate translation. The polypeptide is Large ribosomal subunit protein bL12 (Mesorhizobium japonicum (strain LMG 29417 / CECT 9101 / MAFF 303099) (Mesorhizobium loti (strain MAFF 303099))).